Reading from the N-terminus, the 511-residue chain is Maturase K (511 aa).

This sequence belongs to the intron maturase 2 family. MatK subfamily.

It is found in the plastid. The protein resides in the chloroplast. Functionally, usually encoded in the trnK tRNA gene intron. Probably assists in splicing its own and other chloroplast group II introns. The chain is Maturase K from Bromus inermis (Smooth brome grass).